The chain runs to 374 residues: Heme A synthase (374 aa).

8 consecutive transmembrane segments (helical) span residues 22 to 42, 107 to 127, 135 to 155, 172 to 192, 209 to 229, 265 to 285, 306 to 326, and 327 to 347; these read VAVW…IGAI, LWGR…WVRG, PTLA…WFMV, LHLG…LGLL, AWAA…VAGI, AAVQ…VLSL, AAAT…VVWI, and PLAT…VWTL. Histidine 271 contacts heme. Histidine 332 contributes to the heme binding site.

It belongs to the COX15/CtaA family. Type 2 subfamily. Interacts with CtaB. Heme b serves as cofactor.

It localises to the cell membrane. It catalyses the reaction Fe(II)-heme o + 2 A + H2O = Fe(II)-heme a + 2 AH2. The protein operates within porphyrin-containing compound metabolism; heme A biosynthesis; heme A from heme O: step 1/1. Its function is as follows. Catalyzes the conversion of heme O to heme A by two successive hydroxylations of the methyl group at C8. The first hydroxylation forms heme I, the second hydroxylation results in an unstable dihydroxymethyl group, which spontaneously dehydrates, resulting in the formyl group of heme A. The polypeptide is Heme A synthase (Rhodospirillum centenum (strain ATCC 51521 / SW)).